The primary structure comprises 231 residues: Ribonuclease 3 (231 aa).

Residues 3–130 (MHEFFENFGI…VTAAIYLDQT (128 aa)) form the RNase III domain. Residue E43 participates in Mg(2+) binding. Residue D47 is part of the active site. Mg(2+) contacts are provided by D116 and E119. The active site involves E119. A DRBM domain is found at 157 to 228 (DYKSELQEII…AKDCLNKLKK (72 aa)).

It belongs to the ribonuclease III family. As to quaternary structure, homodimer. Mg(2+) serves as cofactor.

The protein localises to the cytoplasm. The enzyme catalyses Endonucleolytic cleavage to 5'-phosphomonoester.. Its function is as follows. Digests double-stranded RNA. Involved in the processing of primary rRNA transcript to yield the immediate precursors to the large and small rRNAs (23S and 16S). Processes some mRNAs, and tRNAs when they are encoded in the rRNA operon. Processes pre-crRNA and tracrRNA of type II CRISPR loci if present in the organism. This chain is Ribonuclease 3, found in Mesoplasma florum (strain ATCC 33453 / NBRC 100688 / NCTC 11704 / L1) (Acholeplasma florum).